The sequence spans 180 residues: Small ribosomal subunit protein bS16 (180 aa).

Belongs to the bacterial ribosomal protein bS16 family.

This Flavobacterium psychrophilum (strain ATCC 49511 / DSM 21280 / CIP 103535 / JIP02/86) protein is Small ribosomal subunit protein bS16.